The primary structure comprises 857 residues: DNA mismatch repair protein MutS (857 aa).

608-615 (GPNMSGKS) is a binding site for ATP.

This sequence belongs to the DNA mismatch repair MutS family.

Functionally, this protein is involved in the repair of mismatches in DNA. It is possible that it carries out the mismatch recognition step. This protein has a weak ATPase activity. The chain is DNA mismatch repair protein MutS from Lacticaseibacillus casei (strain BL23) (Lactobacillus casei).